Consider the following 418-residue polypeptide: Serpin A3-8 (418 aa).

Residues 1-25 form the signal peptide; it reads MRAERMSPLLALGLLVSGLCSRVHC. Residues Asn-103, Asn-183, Asn-233, and Asn-268 are each glycosylated (N-linked (GlcNAc...) asparagine).

The protein belongs to the serpin family. Homodimer.

It is found in the cytoplasmic vesicle. Its subcellular location is the secretory vesicle. The protein resides in the chromaffin granule. It localises to the secreted. In terms of biological role, serine protease inhibitor. The chain is Serpin A3-8 from Bos taurus (Bovine).